A 195-amino-acid chain; its full sequence is HTH-type transcriptional regulator BetI (195 aa).

The HTH tetR-type domain maps to 8–68 (EIRRAQLIDA…ATMRHVLRDL (61 aa)). The H-T-H motif DNA-binding region spans 31–50 (TLASVAQRANISTGIVSHYF).

It participates in amine and polyamine biosynthesis; betaine biosynthesis via choline pathway [regulation]. Its function is as follows. Repressor involved in the biosynthesis of the osmoprotectant glycine betaine. It represses transcription of the choline transporter BetT and the genes of BetAB involved in the synthesis of glycine betaine. This Burkholderia mallei (strain NCTC 10247) protein is HTH-type transcriptional regulator BetI.